The chain runs to 239 residues: Ribonuclease PH (239 aa).

Phosphate-binding positions include arginine 87 and 125–127 (GTR).

This sequence belongs to the RNase PH family. In terms of assembly, homohexameric ring arranged as a trimer of dimers.

It carries out the reaction tRNA(n+1) + phosphate = tRNA(n) + a ribonucleoside 5'-diphosphate. In terms of biological role, phosphorolytic 3'-5' exoribonuclease that plays an important role in tRNA 3'-end maturation. Removes nucleotide residues following the 3'-CCA terminus of tRNAs; can also add nucleotides to the ends of RNA molecules by using nucleoside diphosphates as substrates, but this may not be physiologically important. Probably plays a role in initiation of 16S rRNA degradation (leading to ribosome degradation) during starvation. The chain is Ribonuclease PH from Dehalococcoides mccartyi (strain ATCC BAA-2266 / KCTC 15142 / 195) (Dehalococcoides ethenogenes (strain 195)).